A 172-amino-acid chain; its full sequence is Ribosome maturation factor RimM (172 aa).

A PRC barrel domain is found at 95–168 (AEGEFYYHQI…RVDVEIMEGL (74 aa)).

The protein belongs to the RimM family. In terms of assembly, binds ribosomal protein uS19.

It localises to the cytoplasm. Functionally, an accessory protein needed during the final step in the assembly of 30S ribosomal subunit, possibly for assembly of the head region. Essential for efficient processing of 16S rRNA. May be needed both before and after RbfA during the maturation of 16S rRNA. It has affinity for free ribosomal 30S subunits but not for 70S ribosomes. The protein is Ribosome maturation factor RimM of Streptococcus equi subsp. zooepidemicus (strain H70).